Here is a 341-residue protein sequence, read N- to C-terminus: uncharacterized protein (341 aa).

This sequence belongs to the Gfo/Idh/MocA family.

This is an uncharacterized protein from Bacillus subtilis (strain 168).